The chain runs to 190 residues: 7-methyl-GTP pyrophosphatase (190 aa).

The active-site Proton acceptor is Asp69.

The protein belongs to the Maf family. YceF subfamily. It depends on a divalent metal cation as a cofactor.

Its subcellular location is the cytoplasm. The catalysed reaction is N(7)-methyl-GTP + H2O = N(7)-methyl-GMP + diphosphate + H(+). Nucleoside triphosphate pyrophosphatase that hydrolyzes 7-methyl-GTP (m(7)GTP). May have a dual role in cell division arrest and in preventing the incorporation of modified nucleotides into cellular nucleic acids. This chain is 7-methyl-GTP pyrophosphatase, found in Xanthomonas oryzae pv. oryzae (strain MAFF 311018).